Reading from the N-terminus, the 1619-residue chain is Rap-GAP domain-containing protein DDB_G0281809 (1619 aa).

Disordered stretches follow at residues 128–249 (SMSN…TTPI), 289–316 (QQQQQQSPSITTGTVKGSKYRESVMPGS), 907–974 (SIGG…PYIN), and 1134–1153 (ISNNNTTTTSNNSIKSTSNN). Low complexity-rich tracts occupy residues 130 to 204 (SNNN…SLSL) and 231 to 249 (QISATTTAATSPTTPTTPI). Residues 265–295 (FNEVVQQQQQQQQQQQQQQQQQQQQQQQQQS) are a coiled coil. Composition is skewed to low complexity over residues 916 to 926 (SGNSSQPSSTG) and 934 to 965 (SGSKSNSSSSSSSQPSSTGGSGNNSNSANGGS). The region spanning 1273 to 1494 (LNMLDSVSER…TNRKKLISDI (222 aa)) is the Rap-GAP domain. Residues 1554-1619 (IGTFTLPPPP…LSQSEDQSHK (66 aa)) form a disordered region. Residues 1559–1573 (LPPPPISPTISPQPS) are compositionally biased toward pro residues. Over residues 1574-1590 (PHLSSSGGSWASSKGGS) the composition is skewed to low complexity. The segment covering 1591 to 1619 (TQPTTPSGRTSNFLSRRPNLSQSEDQSHK) has biased composition (polar residues).

This is Rap-GAP domain-containing protein DDB_G0281809 from Dictyostelium discoideum (Social amoeba).